A 593-amino-acid polypeptide reads, in one-letter code: NADH-quinone oxidoreductase subunit C/D (593 aa).

The interval methionine 1–glutamine 184 is NADH dehydrogenase I subunit C. The tract at residues aspartate 208 to arginine 593 is NADH dehydrogenase I subunit D.

The protein in the N-terminal section; belongs to the complex I 30 kDa subunit family. It in the C-terminal section; belongs to the complex I 49 kDa subunit family. In terms of assembly, NDH-1 is composed of 13 different subunits. Subunits NuoB, CD, E, F, and G constitute the peripheral sector of the complex.

It is found in the cell inner membrane. The catalysed reaction is a quinone + NADH + 5 H(+)(in) = a quinol + NAD(+) + 4 H(+)(out). NDH-1 shuttles electrons from NADH, via FMN and iron-sulfur (Fe-S) centers, to quinones in the respiratory chain. The immediate electron acceptor for the enzyme in this species is believed to be ubiquinone. Couples the redox reaction to proton translocation (for every two electrons transferred, four hydrogen ions are translocated across the cytoplasmic membrane), and thus conserves the redox energy in a proton gradient. This chain is NADH-quinone oxidoreductase subunit C/D, found in Azotobacter vinelandii (strain DJ / ATCC BAA-1303).